A 487-amino-acid chain; its full sequence is Sensor protein CseC (487 aa).

The span at 1–11 shows a compositional bias: low complexity; sequence MRGNLRRPGPA. A disordered region spans residues 1 to 41; the sequence is MRGNLRRPGPAGTAGPGRTGIRTSADGGRARPRTGAGTGVR. 2 helical membrane-spanning segments follow: residues 63–83 and 185–205; these read ISAA…LVVH and ALII…VLIG. The HAMP domain occupies 206–262; the sequence is GQLSRRLRKAAAAANQVAQGERDVRVRDAIGGVVRDETDDLARAVDAMADALQQRIE. Residues 270–472 form the Histidine kinase domain; it reads DIAHELRTPV…VAVLWLPEHA (203 aa). At His273 the chain carries Phosphohistidine; by autocatalysis.

It localises to the cell membrane. The enzyme catalyses ATP + protein L-histidine = ADP + protein N-phospho-L-histidine.. The polypeptide is Sensor protein CseC (cseC) (Streptomyces avermitilis (strain ATCC 31267 / DSM 46492 / JCM 5070 / NBRC 14893 / NCIMB 12804 / NRRL 8165 / MA-4680)).